The chain runs to 61 residues: MSFLKKSLFLVLFLGLVSFSICEEEKRETEEEENEDEIEEQSEEKKRFEPVPPGFTPFRQT.

The N-terminal stretch at 1 to 22 (MSFLKKSLFLVLFLGLVSFSIC) is a signal peptide. Positions 23–50 (EEEKRETEEEENEDEIEEQSEEKKRFEP) are excised as a propeptide. The disordered stretch occupies residues 24-61 (EEKRETEEEENEDEIEEQSEEKKRFEPVPPGFTPFRQT). Acidic residues predominate over residues 30-42 (EEEENEDEIEEQS). Pro52 carries the post-translational modification 4-hydroxyproline.

This sequence belongs to the frog skin active peptide (FSAP) family. Bradykinin-related peptide subfamily. Expressed by the skin glands.

The protein resides in the secreted. May produce in vitro relaxation of rat arterial smooth muscle and constriction of intestinal smooth muscle. May target bradykinin receptors (BDKRB). In Pithecopus azureus (Orange-legged monkey tree frog), this protein is Probradykinin-2.